A 427-amino-acid polypeptide reads, in one-letter code: MFCYQCSQTVRGRACTIRGVCGKEPTVARLQDNLLFAIKGISAYLYHARELGYTDEEVDAFLERGFYSTLTNVNFDAGEFIDLALEAGEMNIRTMKLLKKAHIDTYGEPEPTEVRVGALEGPAIIATGHSLRALEELLKQTEGTGINVYTHSELLPAHGYPGLRKYPHLAGQLGGPWFDQKDTFSRYTAAILGTSNCVLLPRDDYRDRMFTCGVAALPGVEHLEGYDFSPLIDKALELPPLSEEDATTLTTGFGLSTILSLADKIRELVEDGKIRRFFLVGGCDSPLPRAKYYTEFVRKLPEDTVVLTLACGKYRFNSMDLGDIEGVPRLIDLGQCNDAIVAVELVEALSNLFQMDINELPLSIILSWMEQKAAAILWSLLSLDLKGMYIGPILPGWANEDIVKFLVDNYDLTPIGDPEEDIRKILG.

Positions 3, 6, 15, and 21 each coordinate [4Fe-4S] cluster. The hybrid [4Fe-2O-2S] cluster site is built by His-129, Glu-153, Cys-197, Cys-283, Cys-311, Cys-336, Glu-370, and Lys-372. Cys-283 is subject to Cysteine persulfide.

This sequence belongs to the HCP family. The cofactor is [4Fe-4S] cluster. Hybrid [4Fe-2O-2S] cluster is required as a cofactor.

It is found in the cytoplasm. The enzyme catalyses A + NH4(+) + H2O = hydroxylamine + AH2 + H(+). Catalyzes the reduction of hydroxylamine to form NH(3) and H(2)O. The protein is Hydroxylamine reductase of Methanothermobacter thermautotrophicus (strain ATCC 29096 / DSM 1053 / JCM 10044 / NBRC 100330 / Delta H) (Methanobacterium thermoautotrophicum).